The primary structure comprises 426 residues: Histidine--tRNA ligase (426 aa).

It belongs to the class-II aminoacyl-tRNA synthetase family. As to quaternary structure, homodimer.

The protein localises to the cytoplasm. The catalysed reaction is tRNA(His) + L-histidine + ATP = L-histidyl-tRNA(His) + AMP + diphosphate + H(+). The polypeptide is Histidine--tRNA ligase (Prochlorococcus marinus (strain MIT 9312)).